Consider the following 441-residue polypeptide: Glutamate--tRNA ligase 2 (441 aa).

A 'HIGH' region motif is present at residues 6-16 (PSPTGDMHIGN). The 'KMSKS' region signature appears at 231–235 (KMSKR). ATP is bound at residue lysine 234.

This sequence belongs to the class-I aminoacyl-tRNA synthetase family. Glutamate--tRNA ligase type 1 subfamily. As to quaternary structure, monomer.

It is found in the cytoplasm. It carries out the reaction tRNA(Glu) + L-glutamate + ATP = L-glutamyl-tRNA(Glu) + AMP + diphosphate. Catalyzes the attachment of glutamate to tRNA(Glu) in a two-step reaction: glutamate is first activated by ATP to form Glu-AMP and then transferred to the acceptor end of tRNA(Glu). The protein is Glutamate--tRNA ligase 2 of Helicobacter hepaticus (strain ATCC 51449 / 3B1).